The sequence spans 200 residues: Holliday junction branch migration complex subunit RuvA (200 aa).

A domain I region spans residues 1 to 65; that stretch reads MYEYIKGTLT…ETEHVLYGFS (65 aa). Positions 66 to 144 are domain II; it reads SRAERECFRL…TLMPLYLEEP (79 aa). The tract at residues 145–149 is flexible linker; it reads VVPSS. Positions 150-200 are domain III; it reads TANSSFKEGIGALMNLGFSRLAADRMMTEAVKELSEEASVAELLPIALRKS.

It belongs to the RuvA family. In terms of assembly, homotetramer. Forms an RuvA(8)-RuvB(12)-Holliday junction (HJ) complex. HJ DNA is sandwiched between 2 RuvA tetramers; dsDNA enters through RuvA and exits via RuvB. An RuvB hexamer assembles on each DNA strand where it exits the tetramer. Each RuvB hexamer is contacted by two RuvA subunits (via domain III) on 2 adjacent RuvB subunits; this complex drives branch migration. In the full resolvosome a probable DNA-RuvA(4)-RuvB(12)-RuvC(2) complex forms which resolves the HJ.

It localises to the cytoplasm. Functionally, the RuvA-RuvB-RuvC complex processes Holliday junction (HJ) DNA during genetic recombination and DNA repair, while the RuvA-RuvB complex plays an important role in the rescue of blocked DNA replication forks via replication fork reversal (RFR). RuvA specifically binds to HJ cruciform DNA, conferring on it an open structure. The RuvB hexamer acts as an ATP-dependent pump, pulling dsDNA into and through the RuvAB complex. HJ branch migration allows RuvC to scan DNA until it finds its consensus sequence, where it cleaves and resolves the cruciform DNA. The chain is Holliday junction branch migration complex subunit RuvA from Chlamydia trachomatis serovar D (strain ATCC VR-885 / DSM 19411 / UW-3/Cx).